A 690-amino-acid chain; its full sequence is Eukaryotic translation initiation factor 3 subunit B (690 aa).

Residues Met-1–Gly-11 are compositionally biased toward basic and acidic residues. The interval Met-1–Ser-36 is disordered. The segment covering Asn-15–Phe-25 has biased composition (acidic residues). The region spanning Ser-57 to Asp-141 is the RRM domain. WD repeat units lie at residues Thr-207–Lys-246, Gly-292–Leu-331, Ile-334–Glu-369, Glu-442–Leu-484, and Pro-530–Thr-575. Residues Gln-614–Arg-645 are a coiled coil.

The protein belongs to the eIF-3 subunit B family. Component of the eukaryotic translation initiation factor 3 (eIF-3) complex. The eIF-3 complex interacts with pix. Interacts with mxt.

The protein localises to the cytoplasm. Functionally, RNA-binding component of the eukaryotic translation initiation factor 3 (eIF-3) complex, which is involved in protein synthesis of a specialized repertoire of mRNAs and, together with other initiation factors, stimulates binding of mRNA and methionyl-tRNAi to the 40S ribosome. The eIF-3 complex specifically targets and initiates translation of a subset of mRNAs involved in cell proliferation. In Drosophila virilis (Fruit fly), this protein is Eukaryotic translation initiation factor 3 subunit B.